The following is a 350-amino-acid chain: Protein SGT1 homolog A (350 aa).

TPR repeat units lie at residues 2–35 (AKEL…DPNC), 37–69 (EFFA…DPSL), and 71–103 (KAYL…TPSE). A CS domain is found at 149-238 (TAKYRHEYYQ…ADIITWASLE (90 aa)). The SGS domain occupies 260–350 (AYPSSKKVKD…DGMELKKWEI (91 aa)).

The protein belongs to the SGT1 family. In terms of assembly, interacts with RAR1. Forms a ternary complex with RAR1 and barley HSP90.

Functions in R gene-mediated resistance, but participates in a lower extent than SGT1B to RPP5-mediated resistance. Not required for RPM1, RPS2, RPS4 and RPS5-mediated resistance. Probably required for SCF-mediated ubiquitination, by coupling HSP90 to SCF complex for ubiquitination of HSP90 client proteins. The protein is Protein SGT1 homolog A (SGT1A) of Arabidopsis thaliana (Mouse-ear cress).